Here is a 287-residue protein sequence, read N- to C-terminus: mRNA-capping enzyme small subunit (287 aa).

In terms of assembly, heterodimer of a large and a small subunit.

It localises to the virion. It carries out the reaction a 5'-end (5'-triphosphoguanosine)-ribonucleoside in mRNA + S-adenosyl-L-methionine = a 5'-end (N(7)-methyl 5'-triphosphoguanosine)-ribonucleoside in mRNA + S-adenosyl-L-homocysteine. In terms of biological role, catalyzes the last reaction in the mRNA cap formation pathway. This chain is mRNA-capping enzyme small subunit, found in Sus scrofa (Pig).